We begin with the raw amino-acid sequence, 156 residues long: Aspartate 1-decarboxylase (156 aa).

Catalysis depends on Ser29, which acts as the Schiff-base intermediate with substrate; via pyruvic acid. Residue Ser29 is modified to Pyruvic acid (Ser). Position 61 (Thr61) interacts with substrate. The Proton donor role is filled by Tyr62. Residue 77 to 79 (GAA) participates in substrate binding.

The protein belongs to the PanD family. As to quaternary structure, heterooctamer of four alpha and four beta subunits. The cofactor is pyruvate. Is synthesized initially as an inactive proenzyme, which is activated by self-cleavage at a specific serine bond to produce a beta-subunit with a hydroxyl group at its C-terminus and an alpha-subunit with a pyruvoyl group at its N-terminus.

The protein localises to the cytoplasm. It catalyses the reaction L-aspartate + H(+) = beta-alanine + CO2. It functions in the pathway cofactor biosynthesis; (R)-pantothenate biosynthesis; beta-alanine from L-aspartate: step 1/1. Its function is as follows. Catalyzes the pyruvoyl-dependent decarboxylation of aspartate to produce beta-alanine. This is Aspartate 1-decarboxylase from Rhodopirellula baltica (strain DSM 10527 / NCIMB 13988 / SH1).